The following is an 850-amino-acid chain: Rho guanine nucleotide exchange factor 33 (850 aa).

Basic and acidic residues-rich tracts occupy residues 1 to 13 (MEKSKAKQGENEH) and 98 to 113 (EEMQQKIEQLQQEKRR). 2 disordered regions span residues 1–21 (MEKSKAKQGENEHMPVNNPST) and 98–209 (EEMQ…DENL). Residues 54–128 (LEEKVKSCRC…KAKKAQKEEH (75 aa)) adopt a coiled-coil conformation. Residues 130–149 (AQAGPASAPAPGSAPTQGSP) are compositionally biased toward low complexity. A compositionally biased stretch (polar residues) spans 164–175 (DFTNMLPSQNYE). The 176-residue stretch at 273-448 (KRQTVALELL…RVFISHYTLL (176 aa)) folds into the DH domain. 2 disordered regions span residues 504–550 (EMLQ…WELE) and 702–850 (AAQA…WGWW). 2 stretches are compositionally biased toward low complexity: residues 510 to 520 (PSSSSSAPAVS) and 754 to 770 (APHGPAAAAAASRGAPR). An Omega-N-methylarginine modification is found at Arg766. The span at 773–783 (FPQQRSQSEKQ) shows a compositional bias: polar residues. Basic and acidic residues predominate over residues 784–806 (TYLEEMHLEDATRFCPKEERESE). Residues 826-835 (SFRKLFKKKN) show a composition bias toward basic residues.

The polypeptide is Rho guanine nucleotide exchange factor 33 (Arhgef33) (Mus musculus (Mouse)).